A 162-amino-acid polypeptide reads, in one-letter code: ATP synthase subunit delta, mitochondrial (162 aa).

Residues 1–25 (MSSLRLLASAARRATTHVAYTRRGY) constitute a mitochondrion transit peptide.

The protein belongs to the ATPase epsilon chain family. As to quaternary structure, F-type ATPases have 2 components, CF(1) - the catalytic core - and CF(0) - the membrane proton channel. CF(1) has five subunits: alpha(3), beta(3), gamma(1), delta(1), epsilon(1). CF(0) has three main subunits: a, b and c.

It localises to the mitochondrion. The protein resides in the mitochondrion inner membrane. In terms of biological role, mitochondrial membrane ATP synthase (F(1)F(0) ATP synthase or Complex V) produces ATP from ADP in the presence of a proton gradient across the membrane which is generated by electron transport complexes of the respiratory chain. F-type ATPases consist of two structural domains, F(1) - containing the extramembraneous catalytic core, and F(0) - containing the membrane proton channel, linked together by a central stalk and a peripheral stalk. During catalysis, ATP turnover in the catalytic domain of F(1) is coupled via a rotary mechanism of the central stalk subunits to proton translocation. Part of the complex F(1) domain and of the central stalk which is part of the complex rotary element. Rotation of the central stalk against the surrounding alpha(3)beta(3) subunits leads to hydrolysis of ATP in three separate catalytic sites on the beta subunits. The polypeptide is ATP synthase subunit delta, mitochondrial (atpD) (Agaricus bisporus (White button mushroom)).